The following is a 444-amino-acid chain: Trigger factor (444 aa).

The region spanning 160–245 (DMQVTFDFEG…VKQVEKPKLP (86 aa)) is the PPIase FKBP-type domain.

Belongs to the FKBP-type PPIase family. Tig subfamily.

It localises to the cytoplasm. It catalyses the reaction [protein]-peptidylproline (omega=180) = [protein]-peptidylproline (omega=0). Its function is as follows. Involved in protein export. Acts as a chaperone by maintaining the newly synthesized protein in an open conformation. Functions as a peptidyl-prolyl cis-trans isomerase. The chain is Trigger factor from Acinetobacter baumannii (strain SDF).